The sequence spans 91 residues: DNA-directed RNA polymerase subunit omega (91 aa).

This sequence belongs to the RNA polymerase subunit omega family. As to quaternary structure, the RNAP catalytic core consists of 2 alpha, 1 beta, 1 beta' and 1 omega subunit. When a sigma factor is associated with the core the holoenzyme is formed, which can initiate transcription.

The enzyme catalyses RNA(n) + a ribonucleoside 5'-triphosphate = RNA(n+1) + diphosphate. Functionally, promotes RNA polymerase assembly. Latches the N- and C-terminal regions of the beta' subunit thereby facilitating its interaction with the beta and alpha subunits. In Edwardsiella ictaluri (strain 93-146), this protein is DNA-directed RNA polymerase subunit omega.